Reading from the N-terminus, the 592-residue chain is MRQFTHGTLLAILALANTISAIPSFSANNYPAHPAEPLALFAQSQPQAPLGLWTRLRNSVIERLWGVPPQQRNHRGGNKQYPFYSAPASLQARYSDDVVLRFRLQTADEVKALVEASNILFLDVWASTDEWVDIRLAKDVVPSLLGLLPKSLQTAHVPLIHDLPQTVYESYPSSSQRPTDNGRGFLPSRESSSDVTNIFFEDYQPLSVIGPWMRLLASMFPSHVQLISIGSSFEGRDIPALRVGVRPANDPKPRKTVIIGGGSHAREWIGVSTVNYVAYSLITTYGKSTPISTLLEQFDFIFIPTINPDGYVHTWETDRLWRKNRQETSLPFCPGVDLDRTWGFEWNGNATGDNPCSESYGGDEPFAGTEARQLAGWVKEQTEQHNVKFIAYLDLHSYSQQVLYPYSYSCLPRPPNLENLEELAMGIAKAIRLTNRQSYTVSSACQGFTASQKKVKLDTFPRMESAGGSALDWFYNDVGVKYSYQLKLRDKGSYGFLLPRENIVPTGKEVFNAVMVLGKFLLGSDGFEGLNWEAEFQRLNEADKPILDDGDDDEEEDGQDKNDDSWIPDEYKNDNDHDDDDDGWGLRRRRKR.

The N-terminal stretch at 1–21 (MRQFTHGTLLAILALANTISA) is a signal peptide. Positions 22 to 174 (IPSFSANNYP…QTVYESYPSS (153 aa)) are excised as a propeptide. Positions 170–179 (SYPSSSQRPT) are enriched in polar residues. Positions 170-191 (SYPSSSQRPTDNGRGFLPSRES) are disordered. Residues 202 to 521 (DYQPLSVIGP…NAVMVLGKFL (320 aa)) form the Peptidase M14 domain. The Zn(2+) site is built by H264 and E267. Substrate-binding positions include 264–267 (HARE), R322, and 339–340 (DR). Residues C333 and C356 are joined by a disulfide bond. An N-linked (GlcNAc...) asparagine glycan is attached at N349. H396 contributes to the Zn(2+) binding site. Position 397 to 398 (397 to 398 (SY)) interacts with substrate. Residues 542–592 (ADKPILDDGDDDEEEDGQDKNDDSWIPDEYKNDNDHDDDDDGWGLRRRRKR) are disordered. The segment covering 548–558 (DDGDDDEEEDG) has biased composition (acidic residues). The span at 559 to 575 (QDKNDDSWIPDEYKNDN) shows a compositional bias: basic and acidic residues.

It belongs to the peptidase M14 family. Zn(2+) is required as a cofactor.

The protein localises to the vacuole. It localises to the secreted. Its function is as follows. Inactive carboxypeptidase that may play a role in cell wall organization and biogenesis. In Blastomyces gilchristii (strain SLH14081) (Blastomyces dermatitidis), this protein is Inactive metallocarboxypeptidase ECM14 (ECM14).